Consider the following 227-residue polypeptide: Ribose-5-phosphate isomerase A (227 aa).

Substrate-binding positions include 26–29 (TGST), 82–85 (DGAD), and 95–98 (KGGG). The active-site Proton acceptor is Glu-104. Lys-122 lines the substrate pocket.

It belongs to the ribose 5-phosphate isomerase family. Homodimer.

It carries out the reaction aldehydo-D-ribose 5-phosphate = D-ribulose 5-phosphate. It participates in carbohydrate degradation; pentose phosphate pathway; D-ribose 5-phosphate from D-ribulose 5-phosphate (non-oxidative stage): step 1/1. In terms of biological role, catalyzes the reversible conversion of ribose-5-phosphate to ribulose 5-phosphate. This chain is Ribose-5-phosphate isomerase A, found in Streptococcus equi subsp. zooepidemicus (strain MGCS10565).